Here is an 89-residue protein sequence, read N- to C-terminus: Large ribosomal subunit protein bL27 (89 aa).

Residues 1–22 are disordered; it reads MAHKKGASSSRNGRDSNAQRLG. Positions 7-19 are enriched in polar residues; that stretch reads ASSSRNGRDSNAQ.

The protein belongs to the bacterial ribosomal protein bL27 family.

In Cutibacterium acnes (strain DSM 16379 / KPA171202) (Propionibacterium acnes), this protein is Large ribosomal subunit protein bL27.